The chain runs to 308 residues: Taste receptor type 2 member 43 (308 aa).

Position 1 (M1) is a topological domain, extracellular. A helical transmembrane segment spans residues 2–22 (ITFLPIIFSILVVVTFVIGNC). Over 23–46 (ANGFIALVNSTEWVKRQKISFADQ) the chain is Cytoplasmic. A helical transmembrane segment spans residues 47 to 67 (ILTALAVSRVGLLWVLLLNWY). Residues 68-86 (ATVLNPAFYSVEVRTIVYN) lie on the Extracellular side of the membrane. Residues 87–107 (LWAVINHFSNWLATSLSIFYL) form a helical membrane-spanning segment. Topologically, residues 108-126 (LKIANFSNLIFLHLKRRVK) are cytoplasmic. A helical membrane pass occupies residues 127–147 (SVVLVILLGPLLFLVCHLFVV). Residues 148–178 (NMNEIVRTKEYEGNMTWKSKLRSAMYLSNTT) are Extracellular-facing. N161 and N176 each carry an N-linked (GlcNAc...) asparagine glycan. Residues 179-199 (VTILANLVPFILTLISFLLLI) traverse the membrane as a helical segment. The Cytoplasmic segment spans residues 200–229 (CSLCKHLKKMQLRDKGSQDPSTKVHIKALQ). A helical membrane pass occupies residues 230–249 (TVISLLLCVIYFLSIMISSW). The Extracellular portion of the chain corresponds to 250 to 258 (SLGRVENKA). A helical transmembrane segment spans residues 259–279 (VFMFCKAIRFSYPSAHAFILI). Residues 280–308 (WGNKKLKQTLLSVLWNVRYCVKGQKLPSP) lie on the Cytoplasmic side of the membrane.

Belongs to the G-protein coupled receptor T2R family.

It is found in the membrane. It localises to the cell projection. The protein resides in the cilium membrane. In terms of biological role, gustducin-coupled receptor immplicated in the perception of bitter compounds in the oral cavity and the gastrointestinal tract. Signals through PLCB2 and the calcium-regulated cation channel TRPM5. Activated by the sulfonyl amide sweeteners saccharin and acesulfame K. In airway epithelial cells, binding of bitter compounds increases the intracellular calcium ion concentration and stimulates ciliary beat frequency. May act as chemosensory receptors in airway epithelial cells to detect and eliminate potential noxious agents from the airways. In Papio hamadryas (Hamadryas baboon), this protein is Taste receptor type 2 member 43 (TAS2R43).